The primary structure comprises 875 residues: Translation initiation factor IF-2 (875 aa).

Disordered stretches follow at residues 1–20 (MSDSDKKPTLGRRPLGLKTA), 47–102 (LMGR…LREA), and 126–246 (EEER…DRRG). Over residues 54–66 (AAPTAAPAAAATP) the composition is skewed to low complexity. A compositionally biased stretch (pro residues) spans 67–85 (APTPVAPPPPPPPPPPPPS). 2 stretches are compositionally biased toward basic and acidic residues: residues 88–102 (RETRQEMQVRLLREA) and 126–140 (EEERRRAEEKARAEA). Low complexity-rich tracts occupy residues 141-195 (EAAA…PAAP) and 202-221 (PAAPAVPAPRRFTPVAPAAP). A compositionally biased stretch (basic and acidic residues) spans 223–246 (KRPELAAKKPAHPQRDRKTEDRRG). Positions 374–544 (ARPPVVTIMG…LLQAELLELK (171 aa)) constitute a tr-type G domain. Positions 383-390 (GHVDHGKT) are G1. 383-390 (GHVDHGKT) is a binding site for GTP. Residues 408–412 (GITQH) form a G2 region. Residues 430–433 (DTPG) are G3. GTP is bound by residues 430 to 434 (DTPGH) and 484 to 487 (TKAD). Positions 484–487 (TKAD) are G4. The G5 stretch occupies residues 520–522 (SAK).

Belongs to the TRAFAC class translation factor GTPase superfamily. Classic translation factor GTPase family. IF-2 subfamily.

It localises to the cytoplasm. Functionally, one of the essential components for the initiation of protein synthesis. Protects formylmethionyl-tRNA from spontaneous hydrolysis and promotes its binding to the 30S ribosomal subunits. Also involved in the hydrolysis of GTP during the formation of the 70S ribosomal complex. This chain is Translation initiation factor IF-2, found in Novosphingobium aromaticivorans (strain ATCC 700278 / DSM 12444 / CCUG 56034 / CIP 105152 / NBRC 16084 / F199).